Consider the following 308-residue polypeptide: MPTGDYDSKPSWADQVEEEGIDAEPLSPQIRKPDPVSFVLDTPREVINGNIKTITEYKLNDDDKTVKIVRTFKIETVKASKVVAQRKNWKKFGNSEYDPPGPNVATTTVSDDVLMTFITNKEDLNNQEEEDPMNKLKGQKIVSCRICKGDHWTTRCPYKDTLGPMQKELAEQLGLSTGDKEKAPGAEPEPAQAPVSKTGKYVPPSLRDGGSRRGESMQPNRRADDNATIRVTNLSEDTRETDLQELFRPFGSISRIYLAKDKTTGQSKGFAFISFHRREDAARAIAGVSGFGYDHLILNVEWAKPSTN.

2 disordered regions span residues 1 to 35 (MPTG…KPDP) and 177 to 226 (TGDK…ADDN). Residues 185–194 (GAEPEPAQAP) show a composition bias toward low complexity. Positions 209–226 (GGSRRGESMQPNRRADDN) are enriched in basic and acidic residues. Residues 227–305 (ATIRVTNLSE…LILNVEWAKP (79 aa)) enclose the RRM domain.

The protein belongs to the eIF-3 subunit G family. As to quaternary structure, component of the eukaryotic translation initiation factor 3 (eIF-3) complex, which is composed of 13 subunits: eif3a, eif3b, eif3c, eif3d, eif3e, eif3f, eif3g, eif3h, eif3i, eif3j, eif3k, eif3l and eif3m.

The protein localises to the cytoplasm. RNA-binding component of the eukaryotic translation initiation factor 3 (eIF-3) complex, which is involved in protein synthesis of a specialized repertoire of mRNAs and, together with other initiation factors, stimulates binding of mRNA and methionyl-tRNAi to the 40S ribosome. The eIF-3 complex specifically targets and initiates translation of a subset of mRNAs involved in cell proliferation. This subunit can bind 18S rRNA. The chain is Eukaryotic translation initiation factor 3 subunit G-A (eif3g-a) from Xenopus laevis (African clawed frog).